The sequence spans 127 residues: Fatty acid-binding protein, liver (127 aa).

N-acetylmethionine is present on Met1. N6-succinyllysine is present on residues Lys31 and Lys36. Position 39 is a phosphoserine (Ser39). Residue Lys46 is modified to N6-succinyllysine. Ser56 carries the post-translational modification Phosphoserine. N6-succinyllysine is present on residues Lys57, Lys78, and Lys90. At Ser100 the chain carries Phosphoserine. Asn105 carries the deamidated asparagine; alternate modification. The isoaspartyl glycine isopeptide (Asn-Gly); alternate cross-link spans 105 to 106 (NG). Position 121 is an N6-succinyllysine (Lys121).

This sequence belongs to the calycin superfamily. Fatty-acid binding protein (FABP) family. As to quaternary structure, monomer. In terms of processing, deamidation and transpeptidation at the beta carboxyl of Asn-105 forms an isoaspartyl residue and Edman degradation appears as though blocked. This rearrangement gives rise to an extra negative charge carried by the acid form.

Its subcellular location is the cytoplasm. Plays a role in lipoprotein-mediated cholesterol uptake in hepatocytes. Binds cholesterol. Binds free fatty acids and their coenzyme A derivatives, bilirubin, and some other small molecules in the cytoplasm. May be involved in intracellular lipid transport. The chain is Fatty acid-binding protein, liver (FABP1) from Bos taurus (Bovine).